The sequence spans 444 residues: Phosphoglucosamine mutase (444 aa).

The Phosphoserine intermediate role is filled by serine 103. Positions 103, 241, 243, and 245 each coordinate Mg(2+). Serine 103 carries the post-translational modification Phosphoserine.

The protein belongs to the phosphohexose mutase family. Requires Mg(2+) as cofactor. In terms of processing, activated by phosphorylation.

It carries out the reaction alpha-D-glucosamine 1-phosphate = D-glucosamine 6-phosphate. Functionally, catalyzes the conversion of glucosamine-6-phosphate to glucosamine-1-phosphate. This Deinococcus geothermalis (strain DSM 11300 / CIP 105573 / AG-3a) protein is Phosphoglucosamine mutase.